The primary structure comprises 122 residues: Large ribosomal subunit protein uL14 (122 aa).

It belongs to the universal ribosomal protein uL14 family. In terms of assembly, part of the 50S ribosomal subunit. Forms a cluster with proteins L3 and L19. In the 70S ribosome, L14 and L19 interact and together make contacts with the 16S rRNA in bridges B5 and B8.

Functionally, binds to 23S rRNA. Forms part of two intersubunit bridges in the 70S ribosome. This is Large ribosomal subunit protein uL14 from Cupriavidus taiwanensis (strain DSM 17343 / BCRC 17206 / CCUG 44338 / CIP 107171 / LMG 19424 / R1) (Ralstonia taiwanensis (strain LMG 19424)).